The chain runs to 345 residues: S-adenosylmethionine:tRNA ribosyltransferase-isomerase (345 aa).

This sequence belongs to the QueA family. In terms of assembly, monomer.

Its subcellular location is the cytoplasm. The catalysed reaction is 7-aminomethyl-7-carbaguanosine(34) in tRNA + S-adenosyl-L-methionine = epoxyqueuosine(34) in tRNA + adenine + L-methionine + 2 H(+). Its pathway is tRNA modification; tRNA-queuosine biosynthesis. Transfers and isomerizes the ribose moiety from AdoMet to the 7-aminomethyl group of 7-deazaguanine (preQ1-tRNA) to give epoxyqueuosine (oQ-tRNA). The sequence is that of S-adenosylmethionine:tRNA ribosyltransferase-isomerase from Helicobacter pylori (strain Shi470).